Consider the following 206-residue polypeptide: Small ribosomal subunit protein uS4 (206 aa).

The region spanning 96–157 (SRLDNVVYRM…KAQKQLRVQA (62 aa)) is the S4 RNA-binding domain.

The protein belongs to the universal ribosomal protein uS4 family. Part of the 30S ribosomal subunit. Contacts protein S5. The interaction surface between S4 and S5 is involved in control of translational fidelity.

Its function is as follows. One of the primary rRNA binding proteins, it binds directly to 16S rRNA where it nucleates assembly of the body of the 30S subunit. With S5 and S12 plays an important role in translational accuracy. The protein is Small ribosomal subunit protein uS4 of Alkalilimnicola ehrlichii (strain ATCC BAA-1101 / DSM 17681 / MLHE-1).